The chain runs to 234 residues: Probable flavin reductase (234 aa).

112 to 116 (GGTGL) is a binding site for pyridine.

This sequence belongs to the Fre/LuxG FAD/NAD(P) flavoprotein oxidoreductase family.

In terms of biological role, probable flavin reductase in the luminescent systems of different marine bacteria. This chain is Probable flavin reductase (luxG), found in Photobacterium leiognathi.